Here is a 131-residue protein sequence, read N- to C-terminus: Small ribosomal subunit protein uS8 (131 aa).

The protein belongs to the universal ribosomal protein uS8 family. As to quaternary structure, part of the 30S ribosomal subunit. Contacts proteins S5 and S12.

One of the primary rRNA binding proteins, it binds directly to 16S rRNA central domain where it helps coordinate assembly of the platform of the 30S subunit. The polypeptide is Small ribosomal subunit protein uS8 (Ruminiclostridium cellulolyticum (strain ATCC 35319 / DSM 5812 / JCM 6584 / H10) (Clostridium cellulolyticum)).